A 446-amino-acid chain; its full sequence is T-box transcription factor TBX19 (446 aa).

A DNA-binding region (T-box) is located at residues 43–216 (LEDAPLWQRF…YNPFAKAFLD (174 aa)).

The protein localises to the nucleus. Transcriptional regulator involved in developmental processes. Can activate POMC gene expression and repress the alpha glycoprotein subunit and thyroid-stimulating hormone beta promoters. This Mus musculus (Mouse) protein is T-box transcription factor TBX19.